A 623-amino-acid polypeptide reads, in one-letter code: V-type proton ATPase catalytic subunit A (623 aa).

Residue 252–259 (GAFGCGKT) coordinates ATP.

The protein belongs to the ATPase alpha/beta chains family. V-ATPase is a heteromultimeric enzyme composed of a peripheral catalytic V1 complex (main components: subunits A, B, C, D, E, and F) attached to an integral membrane V0 proton pore complex (main component: the proteolipid protein).

It carries out the reaction ATP + H2O + 4 H(+)(in) = ADP + phosphate + 5 H(+)(out). Catalytic subunit of the peripheral V1 complex of vacuolar ATPase. V-ATPase vacuolar ATPase is responsible for acidifying a variety of intracellular compartments in eukaryotic cells. The polypeptide is V-type proton ATPase catalytic subunit A (Brassica napus (Rape)).